The following is a 327-amino-acid chain: Replication factor C small subunit (327 aa).

47-54 (GPPGTGKT) is a binding site for ATP.

It belongs to the activator 1 small subunits family. RfcS subfamily. As to quaternary structure, heteromultimer composed of small subunits (RfcS) and large subunits (RfcL).

Functionally, part of the RFC clamp loader complex which loads the PCNA sliding clamp onto DNA. The sequence is that of Replication factor C small subunit from Sulfurisphaera tokodaii (strain DSM 16993 / JCM 10545 / NBRC 100140 / 7) (Sulfolobus tokodaii).